We begin with the raw amino-acid sequence, 219 residues long: Proteasome subunit beta (219 aa).

The propeptide at 1 to 14 is removed in mature form; by autocatalysis; the sequence is MISGSEYHKEYMKG. The Nucleophile role is filled by T15.

This sequence belongs to the peptidase T1B family. As to quaternary structure, the 20S proteasome core is composed of 14 alpha and 14 beta subunits that assemble into four stacked heptameric rings, resulting in a barrel-shaped structure. The two inner rings, each composed of seven catalytic beta subunits, are sandwiched by two outer rings, each composed of seven alpha subunits. The catalytic chamber with the active sites is on the inside of the barrel. Has a gated structure, the ends of the cylinder being occluded by the N-termini of the alpha-subunits. Is capped at one or both ends by the proteasome regulatory ATPase, PAN.

The protein localises to the cytoplasm. The enzyme catalyses Cleavage of peptide bonds with very broad specificity.. Its activity is regulated as follows. The formation of the proteasomal ATPase PAN-20S proteasome complex, via the docking of the C-termini of PAN into the intersubunit pockets in the alpha-rings, triggers opening of the gate for substrate entry. Interconversion between the open-gate and close-gate conformations leads to a dynamic regulation of the 20S proteasome proteolysis activity. Functionally, component of the proteasome core, a large protease complex with broad specificity involved in protein degradation. This is Proteasome subunit beta from Methanococcus vannielii (strain ATCC 35089 / DSM 1224 / JCM 13029 / OCM 148 / SB).